Reading from the N-terminus, the 685-residue chain is Putative alpha-1,3-mannosyltransferase MNN14 (685 aa).

Residues Met-1–Lys-13 are Cytoplasmic-facing. The helical transmembrane segment at Leu-14 to Ser-34 threads the bilayer. The Lumenal segment spans residues Gln-35–Leu-685. Residues Asn-199, Asn-338, Asn-408, and Asn-556 are each glycosylated (N-linked (GlcNAc...) asparagine).

It belongs to the MNN1/MNT family.

It is found in the golgi apparatus membrane. It functions in the pathway protein modification; protein glycosylation. Responsible for addition of the terminal mannose residues to the outer chain of core N-linked polysaccharides and to O-linked mannotriose. Implicated in late Golgi modifications. Involved in virulence. The polypeptide is Putative alpha-1,3-mannosyltransferase MNN14 (MNN14) (Candida albicans (strain SC5314 / ATCC MYA-2876) (Yeast)).